Consider the following 833-residue polypeptide: Piwi-like protein 2 (833 aa).

A PAZ domain is found at 227–353 (RINRVLNDNS…IPGELCFLCG (127 aa)). The segment at 313-338 (PMRRERKKKDEEGVEKEKEKEAPEEK) is disordered. Basic and acidic residues predominate over residues 320–338 (KKDEEGVEKEKEKEAPEEK). One can recognise a Piwi domain in the interval 515 to 815 (KMALVFVPDD…LAELVGKVHK (301 aa)).

It belongs to the argonaute family. Piwi subfamily. Expressed in dividing adult stem cells.

Functionally, required for the production of functional progeny from adult somatic stem cells (neoblasts). This chain is Piwi-like protein 2 (wi-2), found in Schmidtea mediterranea (Freshwater planarian flatworm).